An 89-amino-acid chain; its full sequence is Small ribosomal subunit protein uS15 (89 aa).

It belongs to the universal ribosomal protein uS15 family. Part of the 30S ribosomal subunit. Forms a bridge to the 50S subunit in the 70S ribosome, contacting the 23S rRNA.

Its function is as follows. One of the primary rRNA binding proteins, it binds directly to 16S rRNA where it helps nucleate assembly of the platform of the 30S subunit by binding and bridging several RNA helices of the 16S rRNA. In terms of biological role, forms an intersubunit bridge (bridge B4) with the 23S rRNA of the 50S subunit in the ribosome. This chain is Small ribosomal subunit protein uS15, found in Levilactobacillus brevis (strain ATCC 367 / BCRC 12310 / CIP 105137 / JCM 1170 / LMG 11437 / NCIMB 947 / NCTC 947) (Lactobacillus brevis).